We begin with the raw amino-acid sequence, 342 residues long: Homocysteine S-methyltransferase 4 (342 aa).

Positions 13–328 constitute a Hcy-binding domain; sequence ALRGFVREAG…ATVRAIARAV (316 aa). The Zn(2+) site is built by C245, C313, and C314.

As to quaternary structure, monomer. It depends on Zn(2+) as a cofactor.

The enzyme catalyses S-methyl-L-methionine + L-homocysteine = 2 L-methionine + H(+). Catalyzes methyl transfer from S-methylmethionine (SMM) to adenosyl-L-homocysteine (AdoMet). SMM degradation (by HMT-1, HMT-2, HMT-3 and HMT-4) and biosynthesis (by MMT1) constitute the SMM cycle in plants, which is probably required to achieve short term control of AdoMet level. The sequence is that of Homocysteine S-methyltransferase 4 (HMT-4) from Zea mays (Maize).